Reading from the N-terminus, the 330-residue chain is Aspartate--ammonia ligase (330 aa).

This sequence belongs to the class-II aminoacyl-tRNA synthetase family. AsnA subfamily.

Its subcellular location is the cytoplasm. It carries out the reaction L-aspartate + NH4(+) + ATP = L-asparagine + AMP + diphosphate + H(+). Its pathway is amino-acid biosynthesis; L-asparagine biosynthesis; L-asparagine from L-aspartate (ammonia route): step 1/1. The chain is Aspartate--ammonia ligase from Streptococcus thermophilus (strain CNRZ 1066).